We begin with the raw amino-acid sequence, 398 residues long: Succinate--CoA ligase [ADP-forming] subunit beta (398 aa).

In terms of domain architecture, ATP-grasp spans 9 to 254 (KRLLHTYGAP…LTEEDPKEIE (246 aa)). Residues K46, 53 to 55 (GRG), E109, A112, and E117 each bind ATP. Mg(2+)-binding residues include N209 and D223. Substrate contacts are provided by residues N274 and 331–333 (GIM).

It belongs to the succinate/malate CoA ligase beta subunit family. Heterotetramer of two alpha and two beta subunits. It depends on Mg(2+) as a cofactor.

The catalysed reaction is succinate + ATP + CoA = succinyl-CoA + ADP + phosphate. The enzyme catalyses GTP + succinate + CoA = succinyl-CoA + GDP + phosphate. It participates in carbohydrate metabolism; tricarboxylic acid cycle; succinate from succinyl-CoA (ligase route): step 1/1. In terms of biological role, succinyl-CoA synthetase functions in the citric acid cycle (TCA), coupling the hydrolysis of succinyl-CoA to the synthesis of either ATP or GTP and thus represents the only step of substrate-level phosphorylation in the TCA. The beta subunit provides nucleotide specificity of the enzyme and binds the substrate succinate, while the binding sites for coenzyme A and phosphate are found in the alpha subunit. The protein is Succinate--CoA ligase [ADP-forming] subunit beta of Brucella abortus (strain S19).